The primary structure comprises 557 residues: 2-succinyl-5-enolpyruvyl-6-hydroxy-3-cyclohexene-1-carboxylate synthase (557 aa).

The protein belongs to the TPP enzyme family. MenD subfamily. In terms of assembly, homodimer. Requires Mg(2+) as cofactor. It depends on Mn(2+) as a cofactor. Thiamine diphosphate is required as a cofactor.

It carries out the reaction isochorismate + 2-oxoglutarate + H(+) = 5-enolpyruvoyl-6-hydroxy-2-succinyl-cyclohex-3-ene-1-carboxylate + CO2. The protein operates within quinol/quinone metabolism; 1,4-dihydroxy-2-naphthoate biosynthesis; 1,4-dihydroxy-2-naphthoate from chorismate: step 2/7. It participates in quinol/quinone metabolism; menaquinone biosynthesis. Functionally, catalyzes the thiamine diphosphate-dependent decarboxylation of 2-oxoglutarate and the subsequent addition of the resulting succinic semialdehyde-thiamine pyrophosphate anion to isochorismate to yield 2-succinyl-5-enolpyruvyl-6-hydroxy-3-cyclohexene-1-carboxylate (SEPHCHC). This chain is 2-succinyl-5-enolpyruvyl-6-hydroxy-3-cyclohexene-1-carboxylate synthase, found in Staphylococcus aureus (strain USA300).